The chain runs to 226 residues: 2-C-methyl-D-erythritol 4-phosphate cytidylyltransferase (226 aa).

The protein belongs to the IspD/TarI cytidylyltransferase family. IspD subfamily.

It carries out the reaction 2-C-methyl-D-erythritol 4-phosphate + CTP + H(+) = 4-CDP-2-C-methyl-D-erythritol + diphosphate. It functions in the pathway isoprenoid biosynthesis; isopentenyl diphosphate biosynthesis via DXP pathway; isopentenyl diphosphate from 1-deoxy-D-xylulose 5-phosphate: step 2/6. Its function is as follows. Catalyzes the formation of 4-diphosphocytidyl-2-C-methyl-D-erythritol from CTP and 2-C-methyl-D-erythritol 4-phosphate (MEP). This Trichodesmium erythraeum (strain IMS101) protein is 2-C-methyl-D-erythritol 4-phosphate cytidylyltransferase.